The primary structure comprises 418 residues: Glutamyl-tRNA(Gln) amidotransferase subunit D (418 aa).

The 327-residue stretch at proline 81–serine 407 folds into the Asparaginase/glutaminase domain. Residues threonine 91, threonine 166, aspartate 167, and lysine 243 contribute to the active site.

Belongs to the asparaginase 1 family. GatD subfamily. In terms of assembly, heterodimer of GatD and GatE.

It carries out the reaction L-glutamyl-tRNA(Gln) + L-glutamine + ATP + H2O = L-glutaminyl-tRNA(Gln) + L-glutamate + ADP + phosphate + H(+). Its function is as follows. Allows the formation of correctly charged Gln-tRNA(Gln) through the transamidation of misacylated Glu-tRNA(Gln) in organisms which lack glutaminyl-tRNA synthetase. The reaction takes place in the presence of glutamine and ATP through an activated gamma-phospho-Glu-tRNA(Gln). The GatDE system is specific for glutamate and does not act on aspartate. This chain is Glutamyl-tRNA(Gln) amidotransferase subunit D, found in Archaeoglobus fulgidus (strain ATCC 49558 / DSM 4304 / JCM 9628 / NBRC 100126 / VC-16).